The sequence spans 309 residues: D-alanine--D-alanine ligase (309 aa).

The region spanning 104-301 is the ATP-grasp domain; sequence KQIWQGSDLP…FDALCVEILA (198 aa). 130–185 is a binding site for ATP; it reads VASLGLPVIIKPVHEGSSIGMSKVEKIEDFAPAIEKATAHDAIVMAEKWITGREYT. Mg(2+)-binding residues include Asp-255, Glu-268, and Asn-270.

Belongs to the D-alanine--D-alanine ligase family. Mg(2+) serves as cofactor. Requires Mn(2+) as cofactor.

It localises to the cytoplasm. The catalysed reaction is 2 D-alanine + ATP = D-alanyl-D-alanine + ADP + phosphate + H(+). It functions in the pathway cell wall biogenesis; peptidoglycan biosynthesis. Cell wall formation. The chain is D-alanine--D-alanine ligase from Acinetobacter baylyi (strain ATCC 33305 / BD413 / ADP1).